Consider the following 377-residue polypeptide: Succinyl-diaminopimelate desuccinylase (377 aa).

H68 contacts Zn(2+). The active site involves D70. A Zn(2+)-binding site is contributed by D101. E135 serves as the catalytic Proton acceptor. Residues E136, E164, and H350 each coordinate Zn(2+).

Belongs to the peptidase M20A family. DapE subfamily. In terms of assembly, homodimer. Zn(2+) is required as a cofactor. The cofactor is Co(2+).

The catalysed reaction is N-succinyl-(2S,6S)-2,6-diaminopimelate + H2O = (2S,6S)-2,6-diaminopimelate + succinate. It participates in amino-acid biosynthesis; L-lysine biosynthesis via DAP pathway; LL-2,6-diaminopimelate from (S)-tetrahydrodipicolinate (succinylase route): step 3/3. Functionally, catalyzes the hydrolysis of N-succinyl-L,L-diaminopimelic acid (SDAP), forming succinate and LL-2,6-diaminopimelate (DAP), an intermediate involved in the bacterial biosynthesis of lysine and meso-diaminopimelic acid, an essential component of bacterial cell walls. The polypeptide is Succinyl-diaminopimelate desuccinylase (Acinetobacter baumannii (strain AB0057)).